The sequence spans 205 residues: Recombination protein RecR (205 aa).

The segment at 58 to 73 (CKKCHTISDHELCAIC) adopts a C4-type zinc-finger fold. The region spanning 81–177 (RVVCIVEDIR…KISTIARGIP (97 aa)) is the Toprim domain.

The protein belongs to the RecR family.

In terms of biological role, may play a role in DNA repair. It seems to be involved in an RecBC-independent recombinational process of DNA repair. It may act with RecF and RecO. The chain is Recombination protein RecR from Cytophaga hutchinsonii (strain ATCC 33406 / DSM 1761 / CIP 103989 / NBRC 15051 / NCIMB 9469 / D465).